The sequence spans 447 residues: Dihydroorotase (447 aa).

Positions 81 and 83 each coordinate Zn(2+). Substrate contacts are provided by residues 83–85 (HFR) and asparagine 115. Residues aspartate 171, histidine 198, and histidine 252 each coordinate Zn(2+). Residue asparagine 298 participates in substrate binding. Aspartate 325 lines the Zn(2+) pocket. Residue aspartate 325 is part of the active site. Residues histidine 329 and 343-344 (FG) each bind substrate.

Belongs to the metallo-dependent hydrolases superfamily. DHOase family. Class I DHOase subfamily. Zn(2+) serves as cofactor.

It catalyses the reaction (S)-dihydroorotate + H2O = N-carbamoyl-L-aspartate + H(+). Its pathway is pyrimidine metabolism; UMP biosynthesis via de novo pathway; (S)-dihydroorotate from bicarbonate: step 3/3. Functionally, catalyzes the reversible cyclization of carbamoyl aspartate to dihydroorotate. In Ehrlichia chaffeensis (strain ATCC CRL-10679 / Arkansas), this protein is Dihydroorotase.